The chain runs to 101 residues: Small ribosomal subunit protein uS14 (101 aa).

The protein belongs to the universal ribosomal protein uS14 family. In terms of assembly, part of the 30S ribosomal subunit. Contacts proteins S3 and S10.

Its function is as follows. Binds 16S rRNA, required for the assembly of 30S particles and may also be responsible for determining the conformation of the 16S rRNA at the A site. This chain is Small ribosomal subunit protein uS14, found in Shewanella putrefaciens (strain CN-32 / ATCC BAA-453).